Consider the following 732-residue polypeptide: 1,4-alpha-glucan branching enzyme GlgB 2 (732 aa).

Catalysis depends on aspartate 413, which acts as the Nucleophile. Glutamate 466 (proton donor) is an active-site residue.

This sequence belongs to the glycosyl hydrolase 13 family. GlgB subfamily. As to quaternary structure, monomer.

It catalyses the reaction Transfers a segment of a (1-&gt;4)-alpha-D-glucan chain to a primary hydroxy group in a similar glucan chain.. The protein operates within glycan biosynthesis; glycogen biosynthesis. In terms of biological role, catalyzes the formation of the alpha-1,6-glucosidic linkages in glycogen by scission of a 1,4-alpha-linked oligosaccharide from growing alpha-1,4-glucan chains and the subsequent attachment of the oligosaccharide to the alpha-1,6 position. This Rhizobium etli (strain ATCC 51251 / DSM 11541 / JCM 21823 / NBRC 15573 / CFN 42) protein is 1,4-alpha-glucan branching enzyme GlgB 2.